We begin with the raw amino-acid sequence, 54 residues long: Large ribosomal subunit protein bL33 (54 aa).

The protein belongs to the bacterial ribosomal protein bL33 family.

In Thermobifida fusca (strain YX), this protein is Large ribosomal subunit protein bL33.